The primary structure comprises 449 residues: CCA-adding enzyme (449 aa).

Residues serine 53 and lysine 56 each contribute to the ATP site. Residues serine 53 and lysine 56 each contribute to the CTP site. Residues aspartate 65, aspartate 67, and aspartate 119 each contribute to the Mg(2+) site. 3 residues coordinate ATP: histidine 142, lysine 161, and tyrosine 170. Residues histidine 142, lysine 161, and tyrosine 170 each contribute to the CTP site.

It belongs to the tRNA nucleotidyltransferase/poly(A) polymerase family. Archaeal CCA-adding enzyme subfamily. In terms of assembly, homodimer. The cofactor is Mg(2+).

It catalyses the reaction a tRNA precursor + 2 CTP + ATP = a tRNA with a 3' CCA end + 3 diphosphate. The catalysed reaction is a tRNA with a 3' CCA end + 2 CTP + ATP = a tRNA with a 3' CCACCA end + 3 diphosphate. In terms of biological role, catalyzes the addition and repair of the essential 3'-terminal CCA sequence in tRNAs without using a nucleic acid template. Adds these three nucleotides in the order of C, C, and A to the tRNA nucleotide-73, using CTP and ATP as substrates and producing inorganic pyrophosphate. tRNA 3'-terminal CCA addition is required both for tRNA processing and repair. Also involved in tRNA surveillance by mediating tandem CCA addition to generate a CCACCA at the 3' terminus of unstable tRNAs. While stable tRNAs receive only 3'-terminal CCA, unstable tRNAs are marked with CCACCA and rapidly degraded. In Pyrococcus horikoshii (strain ATCC 700860 / DSM 12428 / JCM 9974 / NBRC 100139 / OT-3), this protein is CCA-adding enzyme.